Reading from the N-terminus, the 426-residue chain is Dihydroorotase (426 aa).

Zn(2+) is bound by residues His-58 and His-60. Substrate contacts are provided by residues 60 to 62 (HLR) and Asn-92. 3 residues coordinate Zn(2+): Asp-150, His-177, and His-230. Asn-276 is a binding site for substrate. Asp-303 is a Zn(2+) binding site. The active site involves Asp-303. Residues His-307 and 321-322 (FG) each bind substrate.

Belongs to the metallo-dependent hydrolases superfamily. DHOase family. Class I DHOase subfamily. Zn(2+) is required as a cofactor.

It carries out the reaction (S)-dihydroorotate + H2O = N-carbamoyl-L-aspartate + H(+). It functions in the pathway pyrimidine metabolism; UMP biosynthesis via de novo pathway; (S)-dihydroorotate from bicarbonate: step 3/3. In terms of biological role, catalyzes the reversible cyclization of carbamoyl aspartate to dihydroorotate. This Listeria innocua serovar 6a (strain ATCC BAA-680 / CLIP 11262) protein is Dihydroorotase.